The primary structure comprises 444 residues: MRQLKGRNRCNRAVRHLKIQGKMWLKNLKSGLEQIRESQVRGTRKNFLHDGSFHEAVAPVLAVAQCFCLMPVCGISAPTYRGLSFNRRSWRFWYSSLYLCSTSVDLAFSIRRVAHSVLDVRSVEPIVFHVSILIASWQFLNLAQLWPGLMRHWAAVERRLPGYTCCLQRARPARRLKLVAFVLLVVSLMEHLLSIISVVYYDFCPRRSDPVESYLLGASAQLFEVFPYSNWLAWLGKIQNVLLTFGWSYMDIFLMMLGMGLSEMLARLNRSLEQQVRQPMPEAYWTWSRTLYRSIVELIREVDDAVSGIMLISFGSNLYFICLQLLKSINTMPSSAHAVYFYFSLLFLLSRSTAVLLFVSAINDQAREPLRLLRLVPLKGYHPEVFRFAAELASDQVALTGLKFFNVTRKLFLAMAGTVATYELVLIQFHEDKKTWDCSPFNLD.

Residues 1–56 lie on the Cytoplasmic side of the membrane; sequence MRQLKGRNRCNRAVRHLKIQGKMWLKNLKSGLEQIRESQVRGTRKNFLHDGSFHEA. A helical membrane pass occupies residues 57-77; the sequence is VAPVLAVAQCFCLMPVCGISA. Residues 78–178 lie on the Extracellular side of the membrane; that stretch reads PTYRGLSFNR…RARPARRLKL (101 aa). Residues 179–199 form a helical membrane-spanning segment; it reads VAFVLLVVSLMEHLLSIISVV. Over 200 to 214 the chain is Cytoplasmic; that stretch reads YYDFCPRRSDPVESY. The chain crosses the membrane as a helical span at residues 215–235; sequence LLGASAQLFEVFPYSNWLAWL. At 236 to 240 the chain is on the extracellular side; the sequence is GKIQN. The chain crosses the membrane as a helical span at residues 241 to 261; that stretch reads VLLTFGWSYMDIFLMMLGMGL. At 262–305 the chain is on the cytoplasmic side; it reads SEMLARLNRSLEQQVRQPMPEAYWTWSRTLYRSIVELIREVDDA. Residues 306–326 traverse the membrane as a helical segment; it reads VSGIMLISFGSNLYFICLQLL. Over 327–338 the chain is Extracellular; the sequence is KSINTMPSSAHA. Residues 339–359 traverse the membrane as a helical segment; the sequence is VYFYFSLLFLLSRSTAVLLFV. The Cytoplasmic portion of the chain corresponds to 360 to 410; it reads SAINDQAREPLRLLRLVPLKGYHPEVFRFAAELASDQVALTGLKFFNVTRK. The helical transmembrane segment at 411–431 threads the bilayer; sequence LFLAMAGTVATYELVLIQFHE. Residues 432-444 are Extracellular-facing; it reads DKKTWDCSPFNLD.

Belongs to the insect chemoreceptor superfamily. Gustatory receptor (GR) family. Gr5a subfamily. In terms of tissue distribution, expressed in labellar chemosensory neurons.

It is found in the cell membrane. Gustatory receptor required for response to the sugar trehalose in taste neurons. Gr5a neurons selectively respond to sugars, in contrast to Gr66a cells which respond to bitter compounds. Flies are attracted to sugars and avoid bitter substances, suggesting that Gr5a neuron activity is sufficient to mediate acceptance behavior. Sugar signal transduction occurs through coupling with G-proteins such as Galpha49B and G-salpha60A. The chain is Gustatory receptor 5a for trehalose (Gr5a) from Drosophila melanogaster (Fruit fly).